The primary structure comprises 289 residues: Phosphoribulokinase (289 aa).

Residue Gly-12–Thr-20 participates in ATP binding.

The protein belongs to the phosphoribulokinase family.

The catalysed reaction is D-ribulose 5-phosphate + ATP = D-ribulose 1,5-bisphosphate + ADP + H(+). It participates in carbohydrate biosynthesis; Calvin cycle. This is Phosphoribulokinase (cbbP) from Sinorhizobium medicae (strain WSM419) (Ensifer medicae).